Here is a 493-residue protein sequence, read N- to C-terminus: MAAATGPSFWLGNETLKVPLALFALNRQRLCERLRKNPAVQAGSIVVLQGGEETQRYCTDTGVLFRQESFFHWAFGVTEPGCYGVIDVDTGKSTLFVPRLPASHATWMGKIHSKEHFKEKYAVDDVQYVDEIASVLTSQKPSVLLTLRGVNTDSGSVCREASFDGISKFEVNNTILHPEIVECRVFKTDMELEVLRYTNKISSEAHREVMKAVKVGMKEYELESLFEHYCYSRGGMRHSSYTCICGSGENSAVLHYGHAGAPNDRTIQNGDMCLFDMGGEYYCFASDITCSFPANGKFTADQKAVYEAVLRSSRAVMGAMKPGVWWPDMHRLADRIHLEELAHMGILSGSVDAMVQAHLGAVFMPHGLGHFLGIDVHDVGGYPEGVERIDEPGLRSLRTARHLQPGMVLTVEPGIYFIDHLLDEALADPARASFLNREVLQRFRGFGGVRIEEDVVVTDSGIELLTCVPRTVEEIEACMAGCDKAFTPFSGPK.

Ala-2 is subject to N-acetylalanine. Phosphoserine is present on Ser-167. An a dipeptide-binding site is contributed by His-255. Positions 276, 287, and 370 each coordinate Mn(2+). Position 287 (Asp-287) interacts with a dipeptide. Residues His-377 and Arg-398 each coordinate a dipeptide. Residues Glu-412 and Glu-452 each contribute to the Mn(2+) site.

The protein belongs to the peptidase M24B family. Eukaryotic-type prolidase subfamily. In terms of assembly, homodimer. Mn(2+) serves as cofactor.

It carries out the reaction Xaa-L-Pro dipeptide + H2O = an L-alpha-amino acid + L-proline. With respect to regulation, specifically inhibited by the pseudodipeptide CQ31. Inhibition by CQ31 indirectly activates the CARD8 inflammasome: dipeptide accumulation following PEPD inactivation weaky inhibit dipeptidyl peptidases DDP8 and DPP9, relieving DPP8- and/or DPP9-mediated inhibition of CARD8. In terms of biological role, dipeptidase that catalyzes the hydrolysis of dipeptides with a prolyl (Xaa-Pro) or hydroxyprolyl residue in the C-terminal position. The preferred dipeptide substrate is Gly-Pro, but other Xaa-Pro dipeptides, such as Ala-Pro, Met-Pro, Phe-Pro, Val-Pro and Leu-Pro, can be cleaved. Plays an important role in collagen metabolism because the high level of iminoacids in collagen. The sequence is that of Xaa-Pro dipeptidase from Homo sapiens (Human).